We begin with the raw amino-acid sequence, 340 residues long: Glycerol-3-phosphate dehydrogenase [NAD(P)+] (340 aa).

Residues Ser11, Trp12, Arg33, and Lys106 each contribute to the NADPH site. Sn-glycerol 3-phosphate is bound by residues Lys106, Gly137, and Ser139. Ala141 contacts NADPH. Positions 192, 245, 255, 256, and 257 each coordinate sn-glycerol 3-phosphate. Lys192 serves as the catalytic Proton acceptor. Arg256 contributes to the NADPH binding site. Val280 and Glu282 together coordinate NADPH.

The protein belongs to the NAD-dependent glycerol-3-phosphate dehydrogenase family.

Its subcellular location is the cytoplasm. It catalyses the reaction sn-glycerol 3-phosphate + NAD(+) = dihydroxyacetone phosphate + NADH + H(+). The enzyme catalyses sn-glycerol 3-phosphate + NADP(+) = dihydroxyacetone phosphate + NADPH + H(+). It participates in membrane lipid metabolism; glycerophospholipid metabolism. Its function is as follows. Catalyzes the reduction of the glycolytic intermediate dihydroxyacetone phosphate (DHAP) to sn-glycerol 3-phosphate (G3P), the key precursor for phospholipid synthesis. The sequence is that of Glycerol-3-phosphate dehydrogenase [NAD(P)+] from Bacillus cereus (strain G9842).